A 286-amino-acid chain; its full sequence is Pyridoxine 4-dehydrogenase (286 aa).

The Proton donor role is filled by tyrosine 59. Residue phenylalanine 210–leucine 218 coordinates NADP(+).

This sequence belongs to the aldo/keto reductase family. Aldo/keto reductase 2 subfamily.

The enzyme catalyses pyridoxine + NADP(+) = pyridoxal + NADPH + H(+). It carries out the reaction pyridoxine + NAD(+) = pyridoxal + NADH + H(+). Its function is as follows. Catalyzes the NAD(P)H-dependent reduction of pyridoxal to pyridoxine in vitro. Is not able to reduce 4-pyridoxate, and to oxidize pyridoxine or pyridoxamine. Has Kemp eliminase activity towards the non-physiological substrate 5-nitrobenzisoxazole, producing 4-nitro-2-cyanophenol; this activity is not considered to be physiologically relevant. This is Pyridoxine 4-dehydrogenase from Escherichia coli (strain K12).